A 249-amino-acid polypeptide reads, in one-letter code: Acidic leucine-rich nuclear phosphoprotein 32 family member A (249 aa).

Phosphothreonine is present on threonine 15. Serine 17 carries the post-translational modification Phosphoserine. LRR repeat units follow at residues 18–41 (DVKELVLDNCRSIEGKIEGLTDEF), 43–64 (ELEFLSTINVGLTSVANLPKLN), 65–87 (KLKKLELSDNRISGGLEVLAEKC), and 89–110 (NLTHLNLSGNKIKDLSTIEPLK). The region spanning 123–161 (CEVTNLNDYRENVFKLLPQLTYLDGYDRDDKEAPDSDAE) is the LRRCT domain. A compositionally biased stretch (basic and acidic residues) spans 147–156 (GYDRDDKEAP). The disordered stretch occupies residues 147–249 (GYDRDDKEAP…EPXDXGEDDD (103 aa)). The interval 150 to 174 (RDDKEAPDSDAEGYVEGLDDDEEDE) is necessary for tumor-suppressive function. Positions 157–230 (DSDAEGYVEG…DEEDEEDVGE (74 aa)) are enriched in acidic residues. A phosphoserine mark is found at serine 158 and serine 204. The tract at residues 165–249 (EGLDDDEEDE…EPXDXGEDDD (85 aa)) is interaction with E4F1.

Belongs to the ANP32 family. Component of the SET complex, composed of at least ANP32A, APEX1, HMGB2, NME1, SET and TREX1. Directly interacts with SET. Interacts with ATXN1/SCA1. Interacts with MAP1B. Interacts with ELAVL1. Part of the INHAT (inhibitor of histone acetyltransferases) complex. Interacts with E4F1. Post-translationally, phosphorylated on serine residues, at least in part by casein kinase 2/CK2. Some glutamate residues are glycylated by TTLL8. This modification occurs exclusively on glutamate residues and results in a glycine chain on the gamma-carboxyl group.

Its subcellular location is the nucleus. It localises to the cytoplasm. The protein localises to the endoplasmic reticulum. Its function is as follows. Multifunctional protein that is involved in the regulation of many processes including tumor suppression, apoptosis, cell cycle progression or transcription. Promotes apoptosis by favouring the activation of caspase-9/CASP9 and allowing apoptosome formation. In addition, plays a role in the modulation of histone acetylation and transcription as part of the INHAT (inhibitor of histone acetyltransferases) complex. Inhibits the histone-acetyltranferase activity of EP300/CREBBP (CREB-binding protein) and EP300/CREBBP-associated factor by histone masking. Preferentially binds to unmodified histone H3 and sterically inhibiting its acetylation and phosphorylation leading to cell growth inhibition. Participates in other biochemical processes such as regulation of mRNA nuclear-to-cytoplasmic translocation and stability by its association with ELAVL1 (Hu-antigen R). Plays a role in E4F1-mediated transcriptional repression as well as inhibition of protein phosphatase 2A. The chain is Acidic leucine-rich nuclear phosphoprotein 32 family member A (ANP32A) from Canis lupus familiaris (Dog).